Consider the following 316-residue polypeptide: Ribosomal RNA small subunit methyltransferase H (316 aa).

Residues 35-37 (AGH), aspartate 55, phenylalanine 84, aspartate 105, and glutamine 112 each bind S-adenosyl-L-methionine.

Belongs to the methyltransferase superfamily. RsmH family.

It localises to the cytoplasm. The catalysed reaction is cytidine(1402) in 16S rRNA + S-adenosyl-L-methionine = N(4)-methylcytidine(1402) in 16S rRNA + S-adenosyl-L-homocysteine + H(+). Its function is as follows. Specifically methylates the N4 position of cytidine in position 1402 (C1402) of 16S rRNA. The polypeptide is Ribosomal RNA small subunit methyltransferase H (Streptococcus pneumoniae (strain Taiwan19F-14)).